Here is a 184-residue protein sequence, read N- to C-terminus: Holliday junction branch migration complex subunit RuvA (184 aa).

The segment at 1-64 (MIVAVEGIIT…EDADLLYGFL (64 aa)) is domain I. Residues 65–145 (DEKEKRMFEM…ANDGEQYKIE (81 aa)) are domain II. A region of interest (flexible linker) is located at residue E145. The domain III stretch occupies residues 145–184 (ETISALENLGFKRDKINKILLNCKSTNTADLIKEALKKLA).

This sequence belongs to the RuvA family. Homotetramer. Forms an RuvA(8)-RuvB(12)-Holliday junction (HJ) complex. HJ DNA is sandwiched between 2 RuvA tetramers; dsDNA enters through RuvA and exits via RuvB. An RuvB hexamer assembles on each DNA strand where it exits the tetramer. Each RuvB hexamer is contacted by two RuvA subunits (via domain III) on 2 adjacent RuvB subunits; this complex drives branch migration. In the full resolvosome a probable DNA-RuvA(4)-RuvB(12)-RuvC(2) complex forms which resolves the HJ.

It is found in the cytoplasm. Its function is as follows. The RuvA-RuvB-RuvC complex processes Holliday junction (HJ) DNA during genetic recombination and DNA repair, while the RuvA-RuvB complex plays an important role in the rescue of blocked DNA replication forks via replication fork reversal (RFR). RuvA specifically binds to HJ cruciform DNA, conferring on it an open structure. The RuvB hexamer acts as an ATP-dependent pump, pulling dsDNA into and through the RuvAB complex. HJ branch migration allows RuvC to scan DNA until it finds its consensus sequence, where it cleaves and resolves the cruciform DNA. The polypeptide is Holliday junction branch migration complex subunit RuvA (Campylobacter hominis (strain ATCC BAA-381 / DSM 21671 / CCUG 45161 / LMG 19568 / NCTC 13146 / CH001A)).